Reading from the N-terminus, the 287-residue chain is ATP synthase gamma chain (287 aa).

It belongs to the ATPase gamma chain family. F-type ATPases have 2 components, CF(1) - the catalytic core - and CF(0) - the membrane proton channel. CF(1) has five subunits: alpha(3), beta(3), gamma(1), delta(1), epsilon(1). CF(0) has three main subunits: a, b and c.

Its subcellular location is the cell inner membrane. Produces ATP from ADP in the presence of a proton gradient across the membrane. The gamma chain is believed to be important in regulating ATPase activity and the flow of protons through the CF(0) complex. The protein is ATP synthase gamma chain of Edwardsiella ictaluri (strain 93-146).